The primary structure comprises 394 residues: 2-aminobenzenesulfonate 2,3-dioxygenase subunit alpha (394 aa).

The region spanning 43-154 (WKFVCHVSEI…TETYLGLVFV (112 aa)) is the Rieske domain. Residues C85, H87, C105, and H108 each contribute to the [2Fe-2S] cluster site. The Fe cation site is built by H209 and H213.

It belongs to the bacterial ring-hydroxylating dioxygenase alpha subunit family. Heterotetramer with a alpha2beta2 structure. It depends on [2Fe-2S] cluster as a cofactor. Fe cation is required as a cofactor.

It carries out the reaction 2-aminobenzenesulfonate + NADH + O2 + 2 H(+) = 2,3-dihydroxybenzenesulfonate + NH4(+) + NAD(+). Inhibited by o-phenanthroline. In terms of biological role, alpha subunit of the oxygenase component of the 2-aminobenzenesulfonate 2,3-dioxygenase system (deaminating) (ABSDOS). Can use 2-aminobenzenesulfonate (ABS), benzenesulfonate (BS), 4-toluenesulfonate (TS), 2-nitrobenzenesulfonate, 3- and 4-aminobenzenesulfonates, 4-chloro- and 4-hydroxybenzenesulfonates and pyridine-3-sulfonate as substrates. No desulfonation of ABS to aminocatechol or aminophenol detected. This is 2-aminobenzenesulfonate 2,3-dioxygenase subunit alpha from Alcaligenes sp.